The following is a 215-amino-acid chain: Probable phosphoglycerate mutase GpmB (215 aa).

Residues 8–15, 21–22, R58, 82–85, and 151–152 each bind substrate; these read RHGETVWN, QG, ELNM, and GM. H9 functions as the Tele-phosphohistidine intermediate in the catalytic mechanism. Catalysis depends on E82, which acts as the Proton donor/acceptor.

The protein belongs to the phosphoglycerate mutase family. GpmB subfamily.

The catalysed reaction is (2R)-2-phosphoglycerate = (2R)-3-phosphoglycerate. Its pathway is carbohydrate degradation; glycolysis; pyruvate from D-glyceraldehyde 3-phosphate: step 3/5. This Yersinia enterocolitica serotype O:8 / biotype 1B (strain NCTC 13174 / 8081) protein is Probable phosphoglycerate mutase GpmB.